Reading from the N-terminus, the 405-residue chain is Acetate kinase (405 aa).

A Mg(2+)-binding site is contributed by asparagine 7. Residue lysine 14 coordinates ATP. Arginine 98 serves as a coordination point for substrate. Aspartate 156 (proton donor/acceptor) is an active-site residue. ATP contacts are provided by residues 215-219 (HLGNG), 290-292 (DLR), and 338-342 (GVGEN). Glutamate 391 is a binding site for Mg(2+).

This sequence belongs to the acetokinase family. Homodimer. The cofactor is Mg(2+). Requires Mn(2+) as cofactor.

The protein localises to the cytoplasm. The catalysed reaction is acetate + ATP = acetyl phosphate + ADP. It functions in the pathway metabolic intermediate biosynthesis; acetyl-CoA biosynthesis; acetyl-CoA from acetate: step 1/2. In terms of biological role, catalyzes the formation of acetyl phosphate from acetate and ATP. Can also catalyze the reverse reaction. This Gloeobacter violaceus (strain ATCC 29082 / PCC 7421) protein is Acetate kinase.